The following is a 783-amino-acid chain: E3 UFM1-protein ligase 1 homolog (783 aa).

Residues 406–476 (TLGTTHDADE…DAVQQSANSS (71 aa)) are disordered. The span at 446-457 (KSTKKHQRGRAA) shows a compositional bias: basic residues.

It belongs to the UFL1 family.

Functionally, E3 UFM1-protein ligase that mediates ufmylation of target proteins. In Drosophila grimshawi (Hawaiian fruit fly), this protein is E3 UFM1-protein ligase 1 homolog.